The chain runs to 118 residues: Small ribosomal subunit protein uS13 (118 aa).

A disordered region spans residues 94–118 (SLPVHGQRTKTNARTCKGPRKPIKK).

The protein belongs to the universal ribosomal protein uS13 family. In terms of assembly, part of the 30S ribosomal subunit. Forms a loose heterodimer with protein S19. Forms two bridges to the 50S subunit in the 70S ribosome.

Located at the top of the head of the 30S subunit, it contacts several helices of the 16S rRNA. In the 70S ribosome it contacts the 23S rRNA (bridge B1a) and protein L5 of the 50S subunit (bridge B1b), connecting the 2 subunits; these bridges are implicated in subunit movement. Contacts the tRNAs in the A and P-sites. The sequence is that of Small ribosomal subunit protein uS13 from Buchnera aphidicola subsp. Acyrthosiphon pisum (strain 5A).